A 712-amino-acid polypeptide reads, in one-letter code: Semaphorin-1A (712 aa).

An N-terminal signal peptide occupies residues 1 to 20 (MVVKILVWSICLIALCHAWM). One can recognise a Sema domain in the interval 21 to 483 (PDSSSKLINH…GKDEIRLANL (463 aa)). Over 21–601 (PDSSSKLINH…IGGCAVRQQL (581 aa)) the chain is Extracellular. Residues asparagine 42 and asparagine 69 are each glycosylated (N-linked (GlcNAc...) asparagine). 2 disulfides stabilise this stretch: cysteine 95–cysteine 105 and cysteine 123–cysteine 132. 2 N-linked (GlcNAc...) asparagine glycosylation sites follow: asparagine 161 and asparagine 265. Cystine bridges form between cysteine 242–cysteine 357, cysteine 266–cysteine 316, cysteine 486–cysteine 503, and cysteine 495–cysteine 512. A helical transmembrane segment spans residues 602–622 (VIYTAGTLHIVVVVVSIVGLF). Residues 623–712 (SWLYSGLSVF…TLQKIKKTYI (90 aa)) are Cytoplasmic-facing.

The protein belongs to the semaphorin family.

The protein resides in the membrane. Its function is as follows. Plays a role in growth cones guidance. This Tribolium confusum (Confused flour beetle) protein is Semaphorin-1A (SEMA-1A).